A 115-amino-acid chain; its full sequence is uncharacterized protein (115 aa).

A CHCH domain is found at 63–108; that stretch reads GSPCGFEFREAITCQKTNSDGEIEQGACGKELMSFMECVTRTQCFG. 2 consecutive short sequence motifs (cx9C motif) follow at residues 66–76 and 90–100; these read CGFEFREAITC and CGKELMSFMEC. 2 disulfides stabilise this stretch: cysteine 66–cysteine 100 and cysteine 76–cysteine 90.

This is an uncharacterized protein from Caenorhabditis elegans.